A 386-amino-acid chain; its full sequence is Rhomboid domain-containing protein 3 (386 aa).

The next 5 helical transmembrane spans lie at 20–40 (VLML…LVLA), 58–78 (LGHT…TVGW), 92–112 (ASAL…GLGL), 141–161 (GALP…LLSS), and 163–183 (PPFL…AGAF). Positions 324-362 (VSSLRLQQLERMGFPTEQAVVALAATGRVEGAVSLLVGG) constitute a UBA domain.

The protein resides in the membrane. This chain is Rhomboid domain-containing protein 3 (RHBDD3), found in Homo sapiens (Human).